We begin with the raw amino-acid sequence, 340 residues long: Heat-inducible transcription repressor HrcA (340 aa).

The protein belongs to the HrcA family.

Functionally, negative regulator of class I heat shock genes (grpE-dnaK-dnaJ and groELS operons). Prevents heat-shock induction of these operons. The polypeptide is Heat-inducible transcription repressor HrcA (Clavibacter michiganensis subsp. michiganensis (strain NCPPB 382)).